A 426-amino-acid polypeptide reads, in one-letter code: Glutamate-1-semialdehyde 2,1-aminomutase (426 aa).

Lys-268 is modified (N6-(pyridoxal phosphate)lysine).

The protein belongs to the class-III pyridoxal-phosphate-dependent aminotransferase family. HemL subfamily. It depends on pyridoxal 5'-phosphate as a cofactor.

The protein localises to the cytoplasm. It carries out the reaction (S)-4-amino-5-oxopentanoate = 5-aminolevulinate. Its pathway is porphyrin-containing compound metabolism; protoporphyrin-IX biosynthesis; 5-aminolevulinate from L-glutamyl-tRNA(Glu): step 2/2. The polypeptide is Glutamate-1-semialdehyde 2,1-aminomutase (Saccharolobus islandicus (strain M.16.27) (Sulfolobus islandicus)).